Reading from the N-terminus, the 559-residue chain is Formate--tetrahydrofolate ligase (559 aa).

68–75 provides a ligand contact to ATP; sequence TPAGEGKS.

The protein belongs to the formate--tetrahydrofolate ligase family.

It catalyses the reaction (6S)-5,6,7,8-tetrahydrofolate + formate + ATP = (6R)-10-formyltetrahydrofolate + ADP + phosphate. Its pathway is one-carbon metabolism; tetrahydrofolate interconversion. In Lactobacillus gasseri (strain ATCC 33323 / DSM 20243 / BCRC 14619 / CIP 102991 / JCM 1131 / KCTC 3163 / NCIMB 11718 / NCTC 13722 / AM63), this protein is Formate--tetrahydrofolate ligase.